A 454-amino-acid polypeptide reads, in one-letter code: Bifunctional protein GlmU (454 aa).

Positions 1–226 are pyrophosphorylase; the sequence is MALNVVILAA…AIEVEGANNR (226 aa). Residues 8-11, Lys-22, Gln-73, 78-79, 100-102, Gly-137, Glu-151, Asn-166, and Asn-224 each bind UDP-N-acetyl-alpha-D-glucosamine; these read LAAG, GT, and YGD. A Mg(2+)-binding site is contributed by Asp-102. Asn-224 serves as a coordination point for Mg(2+). The tract at residues 227 to 247 is linker; sequence VQLAQLERAYQARAAEKLMLE. Residues 248–454 are N-acetyltransferase; the sequence is GANLRDPARI…GWTRPVKQKK (207 aa). Positions 330 and 348 each coordinate UDP-N-acetyl-alpha-D-glucosamine. His-360 serves as the catalytic Proton acceptor. Residues Tyr-363 and Asn-374 each contribute to the UDP-N-acetyl-alpha-D-glucosamine site. Residues Ala-377, 383-384, Ser-402, Ala-420, and Arg-437 contribute to the acetyl-CoA site; that span reads NY.

It in the N-terminal section; belongs to the N-acetylglucosamine-1-phosphate uridyltransferase family. The protein in the C-terminal section; belongs to the transferase hexapeptide repeat family. In terms of assembly, homotrimer. Requires Mg(2+) as cofactor.

The protein resides in the cytoplasm. It catalyses the reaction alpha-D-glucosamine 1-phosphate + acetyl-CoA = N-acetyl-alpha-D-glucosamine 1-phosphate + CoA + H(+). The enzyme catalyses N-acetyl-alpha-D-glucosamine 1-phosphate + UTP + H(+) = UDP-N-acetyl-alpha-D-glucosamine + diphosphate. Its pathway is nucleotide-sugar biosynthesis; UDP-N-acetyl-alpha-D-glucosamine biosynthesis; N-acetyl-alpha-D-glucosamine 1-phosphate from alpha-D-glucosamine 6-phosphate (route II): step 2/2. It functions in the pathway nucleotide-sugar biosynthesis; UDP-N-acetyl-alpha-D-glucosamine biosynthesis; UDP-N-acetyl-alpha-D-glucosamine from N-acetyl-alpha-D-glucosamine 1-phosphate: step 1/1. The protein operates within bacterial outer membrane biogenesis; LPS lipid A biosynthesis. Its function is as follows. Catalyzes the last two sequential reactions in the de novo biosynthetic pathway for UDP-N-acetylglucosamine (UDP-GlcNAc). The C-terminal domain catalyzes the transfer of acetyl group from acetyl coenzyme A to glucosamine-1-phosphate (GlcN-1-P) to produce N-acetylglucosamine-1-phosphate (GlcNAc-1-P), which is converted into UDP-GlcNAc by the transfer of uridine 5-monophosphate (from uridine 5-triphosphate), a reaction catalyzed by the N-terminal domain. This Shewanella loihica (strain ATCC BAA-1088 / PV-4) protein is Bifunctional protein GlmU.